A 165-amino-acid chain; its full sequence is MRCPFCGAQDTRVVDSRLSHEGDQVRRRRECGECKERFTTYEAAELNMPRVVKSDGSRQPFREEKLRAGMLRALEKRPVSSDRVEAAITRIEKRLLATGEREVQSRLVGEYVMNELSQLDDVAYVRFASVYRRFEDVNQFREVIDRLESEPDSETAGRQADAFDA.

A zinc finger spans residues Cys3–Cys34. In terms of domain architecture, ATP-cone spans Pro49–Gln139.

The protein belongs to the NrdR family. It depends on Zn(2+) as a cofactor.

Its function is as follows. Negatively regulates transcription of bacterial ribonucleotide reductase nrd genes and operons by binding to NrdR-boxes. The sequence is that of Transcriptional repressor NrdR from Methylococcus capsulatus (strain ATCC 33009 / NCIMB 11132 / Bath).